A 103-amino-acid polypeptide reads, in one-letter code: Acyl carrier protein (103 aa).

A Carrier domain is found at 14–89 (NIVSNIVQDI…EFIDFTLQTI (76 aa)). Serine 49 is modified (O-(pantetheine 4'-phosphoryl)serine).

Belongs to the acyl carrier protein (ACP) family. In terms of processing, 4'-phosphopantetheine is transferred from CoA to a specific serine of apo-ACP by AcpS. This modification is essential for activity because fatty acids are bound in thioester linkage to the sulfhydryl of the prosthetic group.

It is found in the plastid. It localises to the cyanelle. It functions in the pathway lipid metabolism; fatty acid biosynthesis. In terms of biological role, carrier of the growing fatty acid chain in fatty acid biosynthesis. The protein is Acyl carrier protein of Cyanophora paradoxa.